The chain runs to 298 residues: Lipoyl synthase (298 aa).

Positions 40, 45, 51, 67, 71, 74, and 280 each coordinate [4Fe-4S] cluster. Residues 53–269 (AVRRTATFMI…KEIAMAKGFS (217 aa)) enclose the Radical SAM core domain.

It belongs to the radical SAM superfamily. Lipoyl synthase family. Requires [4Fe-4S] cluster as cofactor.

It localises to the cytoplasm. It carries out the reaction [[Fe-S] cluster scaffold protein carrying a second [4Fe-4S](2+) cluster] + N(6)-octanoyl-L-lysyl-[protein] + 2 oxidized [2Fe-2S]-[ferredoxin] + 2 S-adenosyl-L-methionine + 4 H(+) = [[Fe-S] cluster scaffold protein] + N(6)-[(R)-dihydrolipoyl]-L-lysyl-[protein] + 4 Fe(3+) + 2 hydrogen sulfide + 2 5'-deoxyadenosine + 2 L-methionine + 2 reduced [2Fe-2S]-[ferredoxin]. The protein operates within protein modification; protein lipoylation via endogenous pathway; protein N(6)-(lipoyl)lysine from octanoyl-[acyl-carrier-protein]. Catalyzes the radical-mediated insertion of two sulfur atoms into the C-6 and C-8 positions of the octanoyl moiety bound to the lipoyl domains of lipoate-dependent enzymes, thereby converting the octanoylated domains into lipoylated derivatives. The protein is Lipoyl synthase of Bacillus pumilus (strain SAFR-032).